A 615-amino-acid chain; its full sequence is Sodium-dependent dopamine transporter (615 aa).

Residues 1–39 (MQLVPTDDPDEKIGRTSNGMQNATLPIDGPVNTEPKDPA) are disordered. Over 1-46 (MQLVPTDDPDEKIGRTSNGMQNATLPIDGPVNTEPKDPAREQWSGK) the chain is Cytoplasmic. Residues 15 to 24 (RTSNGMQNAT) show a composition bias toward polar residues. A helical transmembrane segment spans residues 47-72 (LDFLLSVVGFAVDLGNIWRFPYLCFK). Residues glycine 55, alanine 57, valine 58, and asparagine 62 each contribute to the Na(+) site. The Extracellular segment spans residues 73–76 (NGGG). Residues 77-100 (VFLIPYSIMVLLTGVPLFYMELCL) traverse the membrane as a helical segment. The Cytoplasmic portion of the chain corresponds to 101 to 120 (GQYYRKGAITTWGRICPLFK). A helical membrane pass occupies residues 121–151 (GIGYCVILTAFYVDFFYNVILAWGLHYLYTS). Over 152–229 (FSFNLPWASC…IRSVTDLGNV (78 aa)) the chain is Extracellular. Cysteine 161 and cysteine 170 are oxidised to a cystine. 2 N-linked (GlcNAc...) asparagine glycosylation sites follow: asparagine 162 and asparagine 187. The chain crosses the membrane as a helical span at residues 230–250 (RWDIALSLFVVYLICYFSMWK). Residues 251–253 (GIH) are Cytoplasmic-facing. Residues 254 to 278 (TSGKVVWFTALFPYVVLGILFIRGV) form a helical membrane-spanning segment. Residues 279–302 (TLPGWQNGIEYYLRPNFEMLKRPS) lie on the Extracellular side of the membrane. Residues 303–328 (VWQDAATQVFFSLGPGFGVLMAYSSY) form a helical membrane-spanning segment. Na(+) is bound at residue serine 314. Over 329–334 (NDFHNN) the chain is Cytoplasmic. A helical transmembrane segment spans residues 335-358 (VYVDALFTSFINCATSFLSGFVIF). Asparagine 346 is a Na(+) binding site. At 359–398 (SVLGYMSCKSGKPIEAVAQEGPGLVFVVYPEALSTMPYAP) the chain is on the extracellular side. A helical membrane pass occupies residues 399–424 (FWSVLFFLMLMTLGLDSSFGGSEAII). Na(+) is bound by residues leucine 411, aspartate 414, and serine 415. The Cytoplasmic portion of the chain corresponds to 425–439 (TGLSDEFPILKKNRE). A helical transmembrane segment spans residues 440-460 (VFVGCLFAFYMVIGIAMCTEG). Position 461 (glycine 461) is a topological domain, extracellular. The helical transmembrane segment at 462–488 (ILIMEWLIIYGTTWGLLIAVFCEAMVI) threads the bilayer. Topologically, residues 489-518 (AYIYGLRQFVHDVKEMMGFRPGNYWKFCWS) are cytoplasmic. A helical transmembrane segment spans residues 519-541 (CAAPFILLSMITSNFINYQALTY). At 542 to 544 (QDY) the chain is on the extracellular side. The helical transmembrane segment at 545-565 (TYPTAANVIGIIFALSGASFI) threads the bilayer. Residues 566–615 (PLVGIYKFVNARGNTISEKWQRVTMPYRKRPNQTEYIPIPTTQPHSDIML) lie on the Cytoplasmic side of the membrane.

It belongs to the sodium:neurotransmitter symporter (SNF) (TC 2.A.22) family.

It is found in the cell membrane. Dopamine transporter. Terminates the action of dopamine by its high affinity sodium-dependent reuptake into presynaptic terminals. Plays a role in the learned avoidance behavior of animals exposed to food that induces mitochondrial stress. This is Sodium-dependent dopamine transporter from Caenorhabditis elegans.